We begin with the raw amino-acid sequence, 240 residues long: MORN repeat-containing protein 3 (240 aa).

The segment at 6–35 (CPKKSESLWKGWDRKAQKNGLRRQVYAVNG) is interaction with MDM2. MORN repeat units follow at residues 38–60 (YVGE…KNGA), 62–84 (YEGD…DQQT), 91–113 (YSGW…PKEY), 114–136 (YEGE…NGDI), 137–159 (YEGQ…NGNR), 160–182 (YEGC…DHGQ), and 184–205 (FEGF…GRDE). Residues 76 to 100 (TLSLPDQQTGKCRRVYSGWWKGDKK) are interaction with SIRT1. The tract at residues 206–240 (APEPTQFPIPEVKILDPDGVLAQALAMFKKTEEGD) is interaction with TP53.

Interacts with MEIG1. Interacts with TP53, MDM2 and SIRT1; the interactions mediate post-transcriptional modifications of TP53 by MDM2 and SIRT1.

Its subcellular location is the cytoplasmic vesicle. It is found in the secretory vesicle. It localises to the acrosome. Assembles a suppression complex (suppresome) by tethering SIRT1 and MDM2 to regulate composite modifications of p53/TP53. Confers both deacetylation-mediated functional inactivation, by SIRT1, and ubiquitination-dependent degradation, by MDM2, of p53/TP53, promoting a proliferative and cell survival behaviors. May play a role in the regulation of spermatogenesis. This is MORN repeat-containing protein 3 (MORN3) from Macaca fascicularis (Crab-eating macaque).